We begin with the raw amino-acid sequence, 336 residues long: ATP-dependent 6-phosphofructokinase 3 (336 aa).

Residues glycine 10, 72 to 73 (RE), and 108 to 111 (GNGT) contribute to the ATP site. Residue asparagine 109 participates in Mg(2+) binding. Substrate contacts are provided by residues 131–133 (TID), arginine 168, 175–177 (MGH), glutamate 228, arginine 255, and 261–264 (YIQR). Aspartate 133 (proton acceptor) is an active-site residue.

This sequence belongs to the phosphofructokinase type A (PFKA) family. Mixed-substrate PFK group III subfamily. Homodimer or homotetramer. Requires Mg(2+) as cofactor.

The protein resides in the cytoplasm. It catalyses the reaction beta-D-fructose 6-phosphate + ATP = beta-D-fructose 1,6-bisphosphate + ADP + H(+). The protein operates within carbohydrate degradation; glycolysis; D-glyceraldehyde 3-phosphate and glycerone phosphate from D-glucose: step 3/4. Catalyzes the phosphorylation of D-fructose 6-phosphate to fructose 1,6-bisphosphate by ATP, the first committing step of glycolysis. The protein is ATP-dependent 6-phosphofructokinase 3 of Bacteroides thetaiotaomicron (strain ATCC 29148 / DSM 2079 / JCM 5827 / CCUG 10774 / NCTC 10582 / VPI-5482 / E50).